A 401-amino-acid chain; its full sequence is tRNA (guanine-N(7)-)-methyltransferase non-catalytic subunit wuho (401 aa).

Residues 45-85 are disordered; sequence KGRPRKYFDADSDSDEEQQNGDEPGTGKNNGGGDTGKKDQD. Residues 54–64 show a composition bias toward acidic residues; it reads ADSDSDEEQQN. WD repeat units follow at residues 86 to 125, 174 to 213, and 217 to 255; these read DQTNAIVALDVNEDRSLVAVATGDKSLYLFEVDQDGRTLK, GHMSQVLDVLIDTEEKLIITSDRDEKIRVTCHPDCHNIET, and GHTEFVSHLEFLGPELLLSLSGDKTLRWWNYTSGKELAR.

Belongs to the WD repeat TRM82 family. In terms of assembly, forms a heterodimer with the catalytic subunit.

The protein resides in the nucleus. It participates in tRNA modification; N(7)-methylguanine-tRNA biosynthesis. Functionally, required for the formation of N(7)-methylguanine at position 46 (m7G46) in tRNA. In the complex, it is required to stabilize and induce conformational changes of the catalytic subunit. The protein is tRNA (guanine-N(7)-)-methyltransferase non-catalytic subunit wuho of Culex quinquefasciatus (Southern house mosquito).